A 243-amino-acid chain; its full sequence is DNA repair protein RecO (243 aa).

This sequence belongs to the RecO family.

Functionally, involved in DNA repair and RecF pathway recombination. The sequence is that of DNA repair protein RecO from Serratia proteamaculans (strain 568).